We begin with the raw amino-acid sequence, 252 residues long: Mitochondrial peculiar membrane protein 1 (252 aa).

Positions 230–252 are disordered; sequence TTTTSKGSSPQVKHKVVSVDEDN.

It is found in the mitochondrion membrane. In Saccharomyces cerevisiae (strain ATCC 204508 / S288c) (Baker's yeast), this protein is Mitochondrial peculiar membrane protein 1 (MPM1).